The following is a 151-amino-acid chain: Ribosome maturation factor RimP (151 aa).

The protein belongs to the RimP family.

The protein resides in the cytoplasm. Functionally, required for maturation of 30S ribosomal subunits. The chain is Ribosome maturation factor RimP from Hydrogenovibrio crunogenus (strain DSM 25203 / XCL-2) (Thiomicrospira crunogena).